The chain runs to 303 residues: Mesenteric estrogen-dependent adipogenesis protein (303 aa).

The protein resides in the cytoplasm. In terms of biological role, involved in processes that promote adipocyte differentiation, lipid accumulation, and glucose uptake in mature adipocytes. This chain is Mesenteric estrogen-dependent adipogenesis protein (MEDAG), found in Bos taurus (Bovine).